Consider the following 324-residue polypeptide: Phospho-N-acetylmuramoyl-pentapeptide-transferase (324 aa).

9 consecutive transmembrane segments (helical) span residues 13-33 (VLSALLMGFAFSMVLGPIFIP), 57-77 (GTPTMGGLIFFISVSVTMLII), 85-105 (GMIVLYSLIAFGIIGFLDDIL), 121-141 (MILLLLFSIALAYYGYTNIGT), 143-163 (IIIPFMNSKLNLGIFYIPLVV), 179-199 (IDGLASSVTVIVLTFFAIVGF), 201-221 (TGHYQVGVFSIALAGALLGFL), 238-260 (LALGGAIATIALILKMPLFIIIV), and 303-323 (VKLVTVFSIITLILCIIGFIA).

Belongs to the glycosyltransferase 4 family. MraY subfamily. It depends on Mg(2+) as a cofactor.

The protein localises to the cell membrane. It catalyses the reaction UDP-N-acetyl-alpha-D-muramoyl-L-alanyl-gamma-D-glutamyl-meso-2,6-diaminopimeloyl-D-alanyl-D-alanine + di-trans,octa-cis-undecaprenyl phosphate = di-trans,octa-cis-undecaprenyl diphospho-N-acetyl-alpha-D-muramoyl-L-alanyl-D-glutamyl-meso-2,6-diaminopimeloyl-D-alanyl-D-alanine + UMP. It functions in the pathway cell wall biogenesis; peptidoglycan biosynthesis. Its function is as follows. Catalyzes the initial step of the lipid cycle reactions in the biosynthesis of the cell wall peptidoglycan: transfers peptidoglycan precursor phospho-MurNAc-pentapeptide from UDP-MurNAc-pentapeptide onto the lipid carrier undecaprenyl phosphate, yielding undecaprenyl-pyrophosphoryl-MurNAc-pentapeptide, known as lipid I. The polypeptide is Phospho-N-acetylmuramoyl-pentapeptide-transferase (Clostridium botulinum (strain Eklund 17B / Type B)).